A 466-amino-acid chain; its full sequence is Ribulose bisphosphate carboxylase large chain (466 aa).

Residue Lys-5 is modified to N6,N6,N6-trimethyllysine. Substrate-binding residues include Asn-114 and Thr-164. The active-site Proton acceptor is the Lys-166. Lys-168 contributes to the substrate binding site. Lys-192, Asp-194, and Glu-195 together coordinate Mg(2+). An N6-carboxylysine modification is found at Lys-192. The active-site Proton acceptor is the His-285. Substrate is bound by residues Arg-286, His-318, and Ser-370.

Belongs to the RuBisCO large chain family. Type I subfamily. Heterohexadecamer of 8 large chains and 8 small chains; disulfide-linked. The disulfide link is formed within the large subunit homodimers. It depends on Mg(2+) as a cofactor. In terms of processing, the disulfide bond which can form in the large chain dimeric partners within the hexadecamer appears to be associated with oxidative stress and protein turnover.

Its subcellular location is the plastid. The protein localises to the chloroplast. The catalysed reaction is 2 (2R)-3-phosphoglycerate + 2 H(+) = D-ribulose 1,5-bisphosphate + CO2 + H2O. It carries out the reaction D-ribulose 1,5-bisphosphate + O2 = 2-phosphoglycolate + (2R)-3-phosphoglycerate + 2 H(+). In terms of biological role, ruBisCO catalyzes two reactions: the carboxylation of D-ribulose 1,5-bisphosphate, the primary event in carbon dioxide fixation, as well as the oxidative fragmentation of the pentose substrate in the photorespiration process. Both reactions occur simultaneously and in competition at the same active site. In Tropaeolum majus (Common nasturtium), this protein is Ribulose bisphosphate carboxylase large chain.